Reading from the N-terminus, the 75-residue chain is Small ribosomal subunit protein bS18 (75 aa).

It belongs to the bacterial ribosomal protein bS18 family. Part of the 30S ribosomal subunit. Forms a tight heterodimer with protein bS6.

Functionally, binds as a heterodimer with protein bS6 to the central domain of the 16S rRNA, where it helps stabilize the platform of the 30S subunit. This is Small ribosomal subunit protein bS18 from Saccharophagus degradans (strain 2-40 / ATCC 43961 / DSM 17024).